A 254-amino-acid polypeptide reads, in one-letter code: Type III pantothenate kinase (254 aa).

Aspartate 6–valine 13 provides a ligand contact to ATP. Substrate is bound by residues tyrosine 100 and glycine 107 to arginine 110. The active-site Proton acceptor is aspartate 109. Aspartate 129 is a binding site for K(+). ATP is bound at residue threonine 132. Substrate is bound at residue threonine 184.

It belongs to the type III pantothenate kinase family. Homodimer. NH4(+) is required as a cofactor. It depends on K(+) as a cofactor.

Its subcellular location is the cytoplasm. It carries out the reaction (R)-pantothenate + ATP = (R)-4'-phosphopantothenate + ADP + H(+). The protein operates within cofactor biosynthesis; coenzyme A biosynthesis; CoA from (R)-pantothenate: step 1/5. Its function is as follows. Catalyzes the phosphorylation of pantothenate (Pan), the first step in CoA biosynthesis. This chain is Type III pantothenate kinase, found in Syntrophus aciditrophicus (strain SB).